A 380-amino-acid polypeptide reads, in one-letter code: 4-hydroxy-tetrahydrodipicolinate synthase, chloroplastic (380 aa).

Residues 1 to 44 are disordered; the sequence is MISPTNLLPARKITPVSNGGAATASPSSPSVAARPRRLPSGLQS. A chloroplast-targeting transit peptide spans 1–54; it reads MISPTNLLPARKITPVSNGGAATASPSSPSVAARPRRLPSGLQSVTGRGKVSLA. Low complexity predominate over residues 21–33; sequence AATASPSSPSVAA. Threonine 123 is a binding site for pyruvate. Catalysis depends on tyrosine 209, which acts as the Proton donor/acceptor. Lysine 237 serves as the catalytic Schiff-base intermediate with substrate. Isoleucine 276 contacts pyruvate.

Belongs to the DapA family. In terms of assembly, tetramer of modified subunits derived from two genes in different combinations.

The protein resides in the plastid. It is found in the chloroplast. The enzyme catalyses L-aspartate 4-semialdehyde + pyruvate = (2S,4S)-4-hydroxy-2,3,4,5-tetrahydrodipicolinate + H2O + H(+). It participates in amino-acid biosynthesis; L-lysine biosynthesis via DAP pathway; (S)-tetrahydrodipicolinate from L-aspartate: step 3/4. With respect to regulation, sensitive to lysine inhibition. This inhibition increase in an allosteric manner with increasing concentration of the inhibitor. In terms of biological role, catalyzes the condensation of (S)-aspartate-beta-semialdehyde [(S)-ASA] and pyruvate to 4-hydroxy-tetrahydrodipicolinate (HTPA). The sequence is that of 4-hydroxy-tetrahydrodipicolinate synthase, chloroplastic from Zea mays (Maize).